We begin with the raw amino-acid sequence, 396 residues long: S-adenosylmethionine synthase (396 aa).

His-16 lines the ATP pocket. Asp-18 contributes to the Mg(2+) binding site. Glu-44 contributes to the K(+) binding site. Positions 57 and 100 each coordinate L-methionine. The flexible loop stretch occupies residues 100 to 110 (QSVDINQGVDR). ATP contacts are provided by residues 165-167 (DAK), 231-232 (KF), Asp-240, 246-247 (RK), Ala-263, and Lys-267. Asp-240 provides a ligand contact to L-methionine. An L-methionine-binding site is contributed by Lys-271.

The protein belongs to the AdoMet synthase family. Homotetramer; dimer of dimers. Requires Mg(2+) as cofactor. K(+) is required as a cofactor.

The protein localises to the cytoplasm. It catalyses the reaction L-methionine + ATP + H2O = S-adenosyl-L-methionine + phosphate + diphosphate. Its pathway is amino-acid biosynthesis; S-adenosyl-L-methionine biosynthesis; S-adenosyl-L-methionine from L-methionine: step 1/1. In terms of biological role, catalyzes the formation of S-adenosylmethionine (AdoMet) from methionine and ATP. The overall synthetic reaction is composed of two sequential steps, AdoMet formation and the subsequent tripolyphosphate hydrolysis which occurs prior to release of AdoMet from the enzyme. This chain is S-adenosylmethionine synthase, found in Azotobacter vinelandii (strain DJ / ATCC BAA-1303).